A 95-amino-acid chain; its full sequence is NADH-quinone oxidoreductase subunit 11 (95 aa).

The next 3 helical transmembrane spans lie at 1 to 21 (MSYL…VLTR), 25 to 45 (ILVF…LVGF), and 59 to 79 (MVIA…VAIF).

Belongs to the complex I subunit 4L family. NDH-1 is composed of 15 different subunits, Nqo1 to Nqo15. The complex has a L-shaped structure, with the hydrophobic arm (subunits Nqo7, Nqo8 and Nqo10 to Nqo14) embedded in the membrane and the hydrophilic peripheral arm (subunits Nqo1 to Nqo6, Nqo9 and Nqo15) protruding into the bacterial cytoplasm. The hydrophilic domain contains all the redox centers.

It is found in the cell inner membrane. It carries out the reaction a quinone + NADH + 5 H(+)(in) = a quinol + NAD(+) + 4 H(+)(out). Its function is as follows. NDH-1 shuttles electrons from NADH, via FMN and iron-sulfur (Fe-S) centers, to quinones in the respiratory chain. The immediate electron acceptor for the enzyme in this species is menaquinone. Couples the redox reaction to proton translocation (for every two electrons transferred, four hydrogen ions are translocated across the cytoplasmic membrane), and thus conserves the redox energy in a proton gradient required for the synthesis of ATP. The protein is NADH-quinone oxidoreductase subunit 11 (nqo11) of Thermus thermophilus (strain ATCC 27634 / DSM 579 / HB8).